Here is a 166-residue protein sequence, read N- to C-terminus: Large ribosomal subunit protein uL10 (166 aa).

The protein belongs to the universal ribosomal protein uL10 family. Part of the ribosomal stalk of the 50S ribosomal subunit. The N-terminus interacts with L11 and the large rRNA to form the base of the stalk. The C-terminus forms an elongated spine to which L12 dimers bind in a sequential fashion forming a multimeric L10(L12)X complex.

Functionally, forms part of the ribosomal stalk, playing a central role in the interaction of the ribosome with GTP-bound translation factors. The polypeptide is Large ribosomal subunit protein uL10 (Pseudomonas fluorescens (strain Pf0-1)).